The following is a 559-amino-acid chain: 2-isopropylmalate synthase (559 aa).

A Pyruvate carboxyltransferase domain is found at 33 to 307 (PIWCSSDLRD…NPDLDFSDID (275 aa)). Mg(2+)-binding residues include Asp-42, His-246, His-248, and Asn-282. Residues 439 to 559 (ANTPYALVSH…SLSQPEAKAA (121 aa)) form a regulatory domain region.

It belongs to the alpha-IPM synthase/homocitrate synthase family. LeuA type 2 subfamily. In terms of assembly, homodimer. Mg(2+) serves as cofactor.

Its subcellular location is the cytoplasm. The enzyme catalyses 3-methyl-2-oxobutanoate + acetyl-CoA + H2O = (2S)-2-isopropylmalate + CoA + H(+). It participates in amino-acid biosynthesis; L-leucine biosynthesis; L-leucine from 3-methyl-2-oxobutanoate: step 1/4. In terms of biological role, catalyzes the condensation of the acetyl group of acetyl-CoA with 3-methyl-2-oxobutanoate (2-ketoisovalerate) to form 3-carboxy-3-hydroxy-4-methylpentanoate (2-isopropylmalate). The chain is 2-isopropylmalate synthase from Pseudomonas fluorescens (strain Pf0-1).